A 600-amino-acid polypeptide reads, in one-letter code: Glutamine--fructose-6-phosphate aminotransferase [isomerizing] (600 aa).

Catalysis depends on cysteine 2, which acts as the Nucleophile; for GATase activity. Positions 2–217 (CGIVGYIGNE…DEELVIVRRD (216 aa)) constitute a Glutamine amidotransferase type-2 domain. 2 consecutive SIS domains span residues 283 to 422 (IRAA…AAGK) and 452 to 590 (IARD…VDKP). Residue lysine 595 is the For Fru-6P isomerization activity of the active site.

Homodimer.

The protein resides in the cytoplasm. The enzyme catalyses D-fructose 6-phosphate + L-glutamine = D-glucosamine 6-phosphate + L-glutamate. Its function is as follows. Catalyzes the first step in hexosamine metabolism, converting fructose-6P into glucosamine-6P using glutamine as a nitrogen source. This is Glutamine--fructose-6-phosphate aminotransferase [isomerizing] from Shouchella clausii (strain KSM-K16) (Alkalihalobacillus clausii).